The primary structure comprises 215 residues: Ribose-5-phosphate isomerase A (215 aa).

Substrate contacts are provided by residues Thr-26–Thr-29, Asp-79–Asp-82, and Lys-92–Gly-95. Glu-101 serves as the catalytic Proton acceptor. Lys-119 is a binding site for substrate.

It belongs to the ribose 5-phosphate isomerase family. As to quaternary structure, homodimer.

The enzyme catalyses aldehydo-D-ribose 5-phosphate = D-ribulose 5-phosphate. It participates in carbohydrate degradation; pentose phosphate pathway; D-ribose 5-phosphate from D-ribulose 5-phosphate (non-oxidative stage): step 1/1. In terms of biological role, catalyzes the reversible conversion of ribose-5-phosphate to ribulose 5-phosphate. This is Ribose-5-phosphate isomerase A from Xylella fastidiosa (strain 9a5c).